Consider the following 282-residue polypeptide: Bifunctional protein FolD (282 aa).

Residues 165–167 (GAS) and Ile-231 each bind NADP(+).

This sequence belongs to the tetrahydrofolate dehydrogenase/cyclohydrolase family. Homodimer.

The enzyme catalyses (6R)-5,10-methylene-5,6,7,8-tetrahydrofolate + NADP(+) = (6R)-5,10-methenyltetrahydrofolate + NADPH. It carries out the reaction (6R)-5,10-methenyltetrahydrofolate + H2O = (6R)-10-formyltetrahydrofolate + H(+). It participates in one-carbon metabolism; tetrahydrofolate interconversion. In terms of biological role, catalyzes the oxidation of 5,10-methylenetetrahydrofolate to 5,10-methenyltetrahydrofolate and then the hydrolysis of 5,10-methenyltetrahydrofolate to 10-formyltetrahydrofolate. The chain is Bifunctional protein FolD from Francisella tularensis subsp. novicida (strain U112).